Reading from the N-terminus, the 613-residue chain is Activating transcription factor 3 (613 aa).

Disordered regions lie at residues 77–115 (RHFN…PSVQ) and 133–218 (KRKL…NKIA). Residues 85-105 (GQSHSQDSSHSSCSGSPLDSP) show a composition bias toward low complexity. Residues 138–147 (TCDSSSGSEQ) are compositionally biased toward polar residues. Over residues 158–175 (NHNGHSGSSNNYSGSMSN) the composition is skewed to low complexity. The span at 178–191 (DLDDDCEESSDDDS) shows a compositional bias: acidic residues. A bZIP domain is found at 205-268 (EDRRRRRRER…QKLVDMLKSH (64 aa)). The segment at 207 to 229 (RRRRRRERNKIAATKCRMKKRER) is basic motif. The tract at residues 233–261 (LIKESEVLDTQNVELKNQVRQLETERQKL) is leucine-zipper. The segment at 337 to 446 (PNGYCKPSPS…SSNATSSTTP (110 aa)) is disordered. Residues 356–368 (QQQQQQQQQQQPQ) are compositionally biased toward low complexity. Positions 369–389 (SLNPAGNNVIDQQHANPSPSL) are enriched in polar residues. Positions 402 to 446 (GSASNHPSHNNNNNNNNSSGASSNTSNNNSNISSHSSNATSSTTP) are enriched in low complexity.

It belongs to the bZIP family. ATF subfamily. As to quaternary structure, interacts with Jra/jun; the interaction enhances the DNA-binding activity of Atf3. In terms of tissue distribution, moderate expression in some regions of the larval nervous system, the ring gland and imaginal disks. High expression in larval gut, excretory malpighian tubules, salivary glands, and, to a lesser extent, the fat body where levels are approximately 2.5-fold less than the gut.

Its subcellular location is the nucleus. In terms of biological role, transcription factor which binds to the cAMP response element (CRE). Regulates metabolic and innate immune homeostasis, possibly by controlling appropriate expression of genes involved in peritrophic matrix composition and ensuring the normal digestive and immune function of the gut. Required for the expression of odorant receptors Or43b and Or47b. In Drosophila melanogaster (Fruit fly), this protein is Activating transcription factor 3.